A 137-amino-acid chain; its full sequence is Phosphatidylinositol N-acetylglucosaminyltransferase subunit P (137 aa).

Helical transmembrane passes span 16 to 36 (VYGF…LIWG) and 58 to 78 (MAMP…YIGL).

It belongs to the PIGP family.

The protein localises to the membrane. It catalyses the reaction a 1,2-diacyl-sn-glycero-3-phospho-(1D-myo-inositol) + UDP-N-acetyl-alpha-D-glucosamine = a 6-(N-acetyl-alpha-D-glucosaminyl)-1-(1,2-diacyl-sn-glycero-3-phospho)-1D-myo-inositol + UDP + H(+). The protein operates within glycolipid biosynthesis; glycosylphosphatidylinositol-anchor biosynthesis. Functionally, part of the complex catalyzing the transfer of N-acetylglucosamine from UDP-N-acetylglucosamine to phosphatidylinositol, the first step of GPI biosynthesis. The polypeptide is Phosphatidylinositol N-acetylglucosaminyltransferase subunit P (Arabidopsis thaliana (Mouse-ear cress)).